The primary structure comprises 340 residues: Dual specificity protein phosphatase 12 (340 aa).

An N-acetylmethionine modification is found at M1. A Tyrosine-protein phosphatase domain is found at 26–171 (QMLEVQPGLY…LKLYQAMGYE (146 aa)). Residue C115 is the Phosphocysteine intermediate of the active site. 116–121 (HAGVSR) contacts substrate. The residue at position 335 (S335) is a Phosphoserine.

It belongs to the protein-tyrosine phosphatase family. Non-receptor class dual specificity subfamily. As to quaternary structure, monomer. Zn(2+) serves as cofactor. As to expression, ubiquitous, highest expression in spleen, testis, ovary, and peripheral blood leukocytes and lower expression in liver and lung.

Its subcellular location is the nucleus. The protein resides in the cytoplasm. It localises to the cytosol. The catalysed reaction is O-phospho-L-tyrosyl-[protein] + H2O = L-tyrosyl-[protein] + phosphate. It carries out the reaction O-phospho-L-seryl-[protein] + H2O = L-seryl-[protein] + phosphate. The enzyme catalyses O-phospho-L-threonyl-[protein] + H2O = L-threonyl-[protein] + phosphate. Dual specificity phosphatase; can dephosphorylate both phosphotyrosine and phosphoserine or phosphothreonine residues. Can dephosphorylate glucokinase (in vitro). Has phosphatase activity with the synthetic substrate 6,8-difluoro-4-methylumbelliferyl phosphate and other in vitro substrates. This chain is Dual specificity protein phosphatase 12 (DUSP12), found in Homo sapiens (Human).